The chain runs to 219 residues: 2-C-methyl-D-erythritol 4-phosphate cytidylyltransferase (219 aa).

The protein belongs to the IspD/TarI cytidylyltransferase family. IspD subfamily.

It carries out the reaction 2-C-methyl-D-erythritol 4-phosphate + CTP + H(+) = 4-CDP-2-C-methyl-D-erythritol + diphosphate. The protein operates within isoprenoid biosynthesis; isopentenyl diphosphate biosynthesis via DXP pathway; isopentenyl diphosphate from 1-deoxy-D-xylulose 5-phosphate: step 2/6. Its function is as follows. Catalyzes the formation of 4-diphosphocytidyl-2-C-methyl-D-erythritol from CTP and 2-C-methyl-D-erythritol 4-phosphate (MEP). The sequence is that of 2-C-methyl-D-erythritol 4-phosphate cytidylyltransferase from Bacteroides thetaiotaomicron (strain ATCC 29148 / DSM 2079 / JCM 5827 / CCUG 10774 / NCTC 10582 / VPI-5482 / E50).